A 120-amino-acid chain; its full sequence is FK506-binding protein 1B (120 aa).

The tract at residues 1–26 is disordered; it reads MGLEKQTLRMGNGKDHPQPGDPVELN. A PPIase FKBP-type domain is found at 20-115; the sequence is GDPVELNYTG…VFEVELLKIK (96 aa).

This sequence belongs to the FKBP-type PPIase family. FKBP1 subfamily.

It carries out the reaction [protein]-peptidylproline (omega=180) = [protein]-peptidylproline (omega=0). Its activity is regulated as follows. Inhibited by both FK506 and rapamycin. In terms of biological role, PPIases accelerate the folding of proteins. It catalyzes the cis-trans isomerization of proline imidic peptide bonds in oligopeptides. This Aspergillus fumigatus (strain ATCC MYA-4609 / CBS 101355 / FGSC A1100 / Af293) (Neosartorya fumigata) protein is FK506-binding protein 1B (fpr1B).